Here is a 154-residue protein sequence, read N- to C-terminus: dCTP deaminase (154 aa).

DCTP is bound by residues 79–84 (RSSLAR), D95, Q124, and Y138.

It belongs to the dCTP deaminase family. As to quaternary structure, homotrimer.

It catalyses the reaction dCTP + H2O + H(+) = dUTP + NH4(+). Its pathway is pyrimidine metabolism; dUMP biosynthesis; dUMP from dCTP (dUTP route): step 1/2. Its function is as follows. Catalyzes the deamination of dCTP to dUTP. This chain is dCTP deaminase, found in Pyrococcus abyssi (strain GE5 / Orsay).